Here is a 368-residue protein sequence, read N- to C-terminus: 7,8-didemethyl-8-hydroxy-5-deazariboflavin synthase (368 aa).

The Radical SAM core domain occupies 36-272; it reads LSYCRNVFLP…EEVSVQVPPN (237 aa). Residues Cys50, Cys54, and Cys57 each coordinate [4Fe-4S] cluster.

It belongs to the radical SAM superfamily. CofG family. As to quaternary structure, consists of two subunits, CofG and CofH. [4Fe-4S] cluster serves as cofactor.

The catalysed reaction is 5-amino-5-(4-hydroxybenzyl)-6-(D-ribitylimino)-5,6-dihydrouracil + S-adenosyl-L-methionine = 7,8-didemethyl-8-hydroxy-5-deazariboflavin + 5'-deoxyadenosine + L-methionine + NH4(+) + H(+). It functions in the pathway cofactor biosynthesis; coenzyme F0 biosynthesis. In terms of biological role, catalyzes the radical-mediated synthesis of 7,8-didemethyl-8-hydroxy-5-deazariboflavin from 5-amino-5-(4-hydroxybenzyl)-6-(D-ribitylimino)-5,6-dihydrouracil. This is 7,8-didemethyl-8-hydroxy-5-deazariboflavin synthase from Haloarcula marismortui (strain ATCC 43049 / DSM 3752 / JCM 8966 / VKM B-1809) (Halobacterium marismortui).